The sequence spans 361 residues: tRNA-specific 2-thiouridylase MnmA (361 aa).

Residues 8–15 (AMSGGVDS) and Met34 each bind ATP. Cys104 (nucleophile) is an active-site residue. Cys104 and Cys202 are disulfide-bonded. Gly128 contributes to the ATP binding site. Residues 152 to 154 (KDQ) form an interaction with tRNA region. Cys202 serves as the catalytic Cysteine persulfide intermediate. Residues 307–308 (RY) form an interaction with tRNA region.

It belongs to the MnmA/TRMU family.

The protein resides in the cytoplasm. It carries out the reaction S-sulfanyl-L-cysteinyl-[protein] + uridine(34) in tRNA + AH2 + ATP = 2-thiouridine(34) in tRNA + L-cysteinyl-[protein] + A + AMP + diphosphate + H(+). In terms of biological role, catalyzes the 2-thiolation of uridine at the wobble position (U34) of tRNA, leading to the formation of s(2)U34. The protein is tRNA-specific 2-thiouridylase MnmA of Caldicellulosiruptor saccharolyticus (strain ATCC 43494 / DSM 8903 / Tp8T 6331).